We begin with the raw amino-acid sequence, 323 residues long: Chitinase 1 (323 aa).

The first 20 residues, 1–20, serve as a signal peptide directing secretion; that stretch reads MRALAVVVVATAFAVVAVRG. The 41-residue stretch at 21–61 folds into the Chitin-binding type-1 domain; that stretch reads EQCGSQAGGALCPNCLCCSQYGWCGSTSAYCGSGCQSQCSG. 8 cysteine pairs are disulfide-bonded: cysteine 23–cysteine 38, cysteine 32–cysteine 44, cysteine 35–cysteine 63, cysteine 37–cysteine 51, cysteine 55–cysteine 59, cysteine 100–cysteine 162, cysteine 176–cysteine 184, and cysteine 283–cysteine 315. The active-site Proton donor is glutamate 144.

Belongs to the glycosyl hydrolase 19 family. Chitinase class I subfamily. As to expression, expressed in roots, leaves, sheaths and meristems.

It carries out the reaction Random endo-hydrolysis of N-acetyl-beta-D-glucosaminide (1-&gt;4)-beta-linkages in chitin and chitodextrins.. Its function is as follows. Hydrolyzes chitin and may play a role in defense against fungal pathogens containing chitin. The sequence is that of Chitinase 1 (Cht1) from Oryza sativa subsp. japonica (Rice).